The sequence spans 78 residues: Translational regulator CsrA (78 aa).

This sequence belongs to the CsrA/RsmA family. Homodimer; the beta-strands of each monomer intercalate to form a hydrophobic core, while the alpha-helices form wings that extend away from the core.

Its subcellular location is the cytoplasm. In terms of biological role, a translational regulator that binds mRNA to regulate translation initiation and/or mRNA stability. Usually binds in the 5'-UTR at or near the Shine-Dalgarno sequence preventing ribosome-binding, thus repressing translation. Its main target seems to be the major flagellin gene, while its function is anatagonized by FliW. The chain is Translational regulator CsrA from Desulfovibrio desulfuricans (strain ATCC 27774 / DSM 6949 / MB).